The chain runs to 847 residues: Collagen alpha-1(I) chain (847 aa).

Residues 1 to 847 (GPMGPSGPRG…PGPIGPPGPR (847 aa)) are disordered. Residues 20–39 (PQGFQGPPGEPGEPGSSGPM) show a composition bias toward low complexity. Over residues 51-65 (NGDDGEAGKPGRPGE) the composition is skewed to basic and acidic residues. The residue at position 85 (serine 85) is a Phosphoserine. Composition is skewed to low complexity over residues 93-109 (DAGPAGPKGEPGSPGEN) and 127-145 (PGASGPAGARGNDGATGAA). Positions 147–159 (PPGPTGPAGPPGF) are enriched in pro residues. Low complexity-rich tracts occupy residues 193-208 (AGAAGPAGNPGADGQP), 219-228 (QGPSGAPGPK), 298-314 (PKGITGSPGSPGPDGKT), 334-343 (PGPKGAAGEP), 500-543 (PSGP…KGDA), 551-599 (PTGA…NAGA), and 628-638 (SPGADGPAGAP). Serine 501 carries the phosphoserine modification. Positions 685–695 (PPGPMGPPGIA) are enriched in pro residues. Residues 697 to 712 (PPGESGREGSPGAEGS) show a composition bias toward low complexity. A compositionally biased stretch (pro residues) spans 731–746 (SGPPGAPGAPGAPGPV). Residues 763 to 777 (AGPAGARGPSGPQGP) are compositionally biased toward low complexity. Basic and acidic residues predominate over residues 778 to 789 (RGDKGETGEQGD). The span at 793 to 838 (SGIQGPPGAPGSPGEQGPSGASGPAGPRGPPGSAGSPGKDGINGIP) shows a compositional bias: low complexity.

This sequence belongs to the fibrillar collagen family. In terms of assembly, trimers of one alpha 2(I) and two alpha 1(I) chains. In terms of processing, prolines at the third position of the tripeptide repeating unit (G-X-Y) are hydroxylated in some or all of the chains. As to expression, forms the fibrils of tendon, ligaments and bones. In bones, the fibrils are mineralized with calcium hydroxyapatite.

The protein resides in the secreted. The protein localises to the extracellular space. It is found in the extracellular matrix. Type I collagen is a member of group I collagen (fibrillar forming collagen). This chain is Collagen alpha-1(I) chain, found in Cyclopes didactylus (Silky anteater).